A 226-amino-acid polypeptide reads, in one-letter code: Ethylene-responsive transcription factor-like protein At4g13040 (226 aa).

Disordered stretches follow at residues 63-109 and 195-226; these read EERS…RKRV and KKPKSRIEHEDTKINASMPHQPEEEEQDSDKM. The span at 97 to 109 shows a compositional bias: basic residues; the sequence is PPKRRKQHRRKRV. The segment at residues 105–171 is a DNA-binding region (AP2/ERF); sequence RRKRVHNQEP…REPNFELSEE (67 aa). Over residues 217 to 226 the composition is skewed to acidic residues; sequence EEEEQDSDKM.

It belongs to the AP2/ERF transcription factor family.

The protein localises to the nucleus. Probably acts as a transcriptional activator. Binds to the GCC-box pathogenesis-related promoter element. May be involved in the regulation of gene expression by stress factors and by components of stress signal transduction pathways. The polypeptide is Ethylene-responsive transcription factor-like protein At4g13040 (Arabidopsis thaliana (Mouse-ear cress)).